The following is a 343-amino-acid chain: Dipeptide transport system permease protein DppC (343 aa).

5 helical membrane passes run 44-64, 144-164, 195-215, 259-279, and 309-329; these read LVAM…AFVV, LIIA…YGII, LALL…LFAW, GVIV…EAVL, and FQLI…IFFG. The 190-residue stretch at 140-329 folds into the ABC transmembrane type-1 domain; sequence LRISLIIALA…VLSLTFIFFG (190 aa).

It belongs to the binding-protein-dependent transport system permease family. OppBC subfamily. As to quaternary structure, the complex is composed of two ATP-binding proteins (DppD and DppF), two transmembrane proteins (DppB and DppC) and a solute-binding protein (DppA).

Its subcellular location is the cell membrane. Its function is as follows. Part of the ABC transporter DppABCDF involved in dipeptide transport. Responsible for the translocation of the substrate across the membrane. This Lactococcus lactis subsp. cremoris (strain MG1363) protein is Dipeptide transport system permease protein DppC.